Consider the following 193-residue polypeptide: MSGIRLIVGLGNPGPEYEKTRHNAGFWLVDELCWQFKGNWRSEGKFHGDVARIQIEGQDVWLLKPMTYMNLSGQAVLALAHFYKILPDEILVVHDELDLAPGVARFKQGGGHGGHNGLKDIAARLSSPAFWRLRLGIGHPGDKKEVANFVLKKPRAEEQQALDEAVLASLRELPRAVSGKMAEAMKALHTEAK.

Residue Y17 participates in tRNA binding. Catalysis depends on H22, which acts as the Proton acceptor. TRNA-binding residues include Y68, N70, and N116.

This sequence belongs to the PTH family. In terms of assembly, monomer.

It is found in the cytoplasm. The catalysed reaction is an N-acyl-L-alpha-aminoacyl-tRNA + H2O = an N-acyl-L-amino acid + a tRNA + H(+). Functionally, hydrolyzes ribosome-free peptidyl-tRNAs (with 1 or more amino acids incorporated), which drop off the ribosome during protein synthesis, or as a result of ribosome stalling. Catalyzes the release of premature peptidyl moieties from peptidyl-tRNA molecules trapped in stalled 50S ribosomal subunits, and thus maintains levels of free tRNAs and 50S ribosomes. This is Peptidyl-tRNA hydrolase from Chromobacterium violaceum (strain ATCC 12472 / DSM 30191 / JCM 1249 / CCUG 213 / NBRC 12614 / NCIMB 9131 / NCTC 9757 / MK).